The following is a 235-amino-acid chain: Probable pyridoxal 5'-phosphate synthase subunit PDX1 (235 aa).

Lysine 16 (schiff-base intermediate with D-ribose 5-phosphate) is an active-site residue. Arginine 104 lines the D-glyceraldehyde 3-phosphate pocket. Residues glycine 153 and 174–175 each bind D-ribose 5-phosphate; that span reads GS.

This sequence belongs to the PdxS/SNZ family.

It catalyses the reaction aldehydo-D-ribose 5-phosphate + D-glyceraldehyde 3-phosphate + L-glutamine = pyridoxal 5'-phosphate + L-glutamate + phosphate + 3 H2O + H(+). The protein operates within cofactor biosynthesis; pyridoxal 5'-phosphate biosynthesis. Its function is as follows. Catalyzes the formation of pyridoxal 5'-phosphate from ribose 5-phosphate (RBP), glyceraldehyde 3-phosphate (G3P) and ammonia. The ammonia is provided by PDX2. Can also use ribulose 5-phosphate and dihydroxyacetone phosphate as substrates, resulting from enzyme-catalyzed isomerization of RBP and G3P, respectively. Also plays an indirect role in resistance to singlet oxygen-generating photosensitizers. The protein is Probable pyridoxal 5'-phosphate synthase subunit PDX1 of Stellaria longipes (Longstalk starwort).